Reading from the N-terminus, the 351-residue chain is Methionine import ATP-binding protein MetN (351 aa).

Residues 2 to 238 (IKLNHINKTY…PKHPITRELI (237 aa)) enclose the ABC transporter domain. ATP is bound at residue 35-42 (GYSGAGKS).

It belongs to the ABC transporter superfamily. Methionine importer (TC 3.A.1.24) family. In terms of assembly, the complex is composed of two ATP-binding proteins (MetN), two transmembrane proteins (MetI) and a solute-binding protein (MetQ).

The protein localises to the cell inner membrane. It catalyses the reaction L-methionine(out) + ATP + H2O = L-methionine(in) + ADP + phosphate + H(+). The catalysed reaction is D-methionine(out) + ATP + H2O = D-methionine(in) + ADP + phosphate + H(+). Functionally, part of the ABC transporter complex MetNIQ involved in methionine import. Responsible for energy coupling to the transport system. The protein is Methionine import ATP-binding protein MetN of Helicobacter hepaticus (strain ATCC 51449 / 3B1).